Here is a 325-residue protein sequence, read N- to C-terminus: UPF0285 protein MMP0642 (325 aa).

The protein belongs to the UPF0285 family.

The polypeptide is UPF0285 protein MMP0642 (Methanococcus maripaludis (strain DSM 14266 / JCM 13030 / NBRC 101832 / S2 / LL)).